A 252-amino-acid polypeptide reads, in one-letter code: Delta-like protein dsl-1 (252 aa).

Residues 1–17 (MLKYLIFLAILISVVHS) form the signal peptide. Residues 120-164 (IKCNRYWHGLHCDHFCNDDFARTINRRCTQNGTLGCLEGFHGPNC) form the DSL domain. Disulfide bonds link cysteine 122/cysteine 131, cysteine 135/cysteine 147, cysteine 155/cysteine 164, cysteine 173/cysteine 181, cysteine 175/cysteine 197, and cysteine 199/cysteine 209. Residues 169–210 (PADSCKCQNGGKCVSSLENTWAQNGSLICECRLGHFEGKHCE) form the EGF-like domain.

As to quaternary structure, may interact with lin-12/Notch receptor.

The protein localises to the secreted. Functionally, probable secreted Notch ligand involved in the mediation of Notch signaling. Involved in the lin-12/Notch pathway-mediated signaling of cell fate in vulval precursor cells (VPCs), acting redundantly with lag-2, apx-1 and osm-11. May also be involved in glp-1/Notch signaling. In Caenorhabditis elegans, this protein is Delta-like protein dsl-1.